The following is a 543-amino-acid chain: MRVLPATLLVGAATAAVPPFQQILGLPKKGADTLSKPLHDFQEQLKTLSDDARRLWDEVAKHFPDSMDHNPVFSLPKKHTRRPDSHWDHIVRGADVQSVWVTGANGEKEREVDGKLEAYDLRVKTTDPGALGIDPGVKQYTGYLDDNENDKHLFYWFFESRNDPKNDPVVLWLNGGPGCSSLTGLFLELGPSSIDSKIKPVYNDFAWNSNASVIFLDQPVNVGYSYSGSAVSDTVAAGKDVYALLTLFFKQFPEYAKQDFHIAGESYAGHYIPVFASEILSHKKRNINLKSVLIGNGLTDPLTQYDHYRPMACGDGGYPAVLDEASCQSMDNALPRCKSMIESCYNTESSWVCVPASIYCNNALIGPYQRTGQNVYDVRGKCEDESNLCYKGMGYVSEYLNKREVREAVGAEVDGYDSCNFDINRNFLFHGDWMKPYHRLVPGLLEQIPVLIYAGDADFICNWLGNKAWSEALEWPGQKEYASAELEDLVIEQNEHQGKKIGQIKSHGNFTFMRLYGGGHMVPMDQPEASLEFFNRWIGGEWF.

A signal peptide spans 1-17 (MRVLPATLLVGAATAAV). Residues 18–124 (PPFQQILGLP…KLEAYDLRVK (107 aa)) constitute a propeptide that is removed on maturation. Disulfide bonds link C179/C419, C313/C327, C337/C360, C344/C353, and C382/C389. N210 carries an N-linked (GlcNAc...) asparagine glycan. S266 is an active-site residue. The active site involves D458. N-linked (GlcNAc...) asparagine glycosylation is present at N509. H520 is a catalytic residue.

Belongs to the peptidase S10 family.

It localises to the vacuole. The enzyme catalyses Release of a C-terminal amino acid with broad specificity.. Its function is as follows. Vacuolar carboxypeptidase involved in degradation of small peptides. Digests preferentially peptides containing an aliphatic or hydrophobic residue in P1' position, as well as methionine, leucine or phenylalanine in P1 position of ester substrate. In Aspergillus clavatus (strain ATCC 1007 / CBS 513.65 / DSM 816 / NCTC 3887 / NRRL 1 / QM 1276 / 107), this protein is Carboxypeptidase Y homolog A (cpyA).